The primary structure comprises 309 residues: Manganese ABC transporter substrate-binding lipoprotein PsaA (309 aa).

Residues 1-19 (MKKLGTLFVLFLSVIVLVA) form the signal peptide. Cys-20 carries the N-palmitoyl cysteine lipid modification. Cys-20 carries S-diacylglycerol cysteine lipidation. His-67, His-139, Glu-205, and Asp-280 together coordinate Mn(2+).

It belongs to the bacterial solute-binding protein 9 family. Lipoprotein receptor antigen (Lrai) subfamily.

It is found in the cell membrane. Part of the ATP-riven (ABC) transport system PsaABC involved in manganese import. Binds manganese with high affinity and specificity and delivers it to the membrane permease for translocation into the cytoplasm. Also acts as an adhesin which is involved on adherence to extracellular matrix. The sequence is that of Manganese ABC transporter substrate-binding lipoprotein PsaA (psaA) from Streptococcus mitis.